The sequence spans 318 residues: Thymidylate synthase (318 aa).

DUMP contacts are provided by residues arginine 25 and 180–181 (RR). Cysteine 200 acts as the Nucleophile in catalysis. DUMP is bound by residues 220 to 223 (RSAD), asparagine 231, and 261 to 263 (HIY). Aspartate 223 provides a ligand contact to (6R)-5,10-methylene-5,6,7,8-tetrahydrofolate. Alanine 317 contributes to the (6R)-5,10-methylene-5,6,7,8-tetrahydrofolate binding site.

The protein belongs to the thymidylate synthase family. Bacterial-type ThyA subfamily. Homodimer.

The protein resides in the cytoplasm. It catalyses the reaction dUMP + (6R)-5,10-methylene-5,6,7,8-tetrahydrofolate = 7,8-dihydrofolate + dTMP. Its pathway is pyrimidine metabolism; dTTP biosynthesis. Its function is as follows. Catalyzes the reductive methylation of 2'-deoxyuridine-5'-monophosphate (dUMP) to 2'-deoxythymidine-5'-monophosphate (dTMP) while utilizing 5,10-methylenetetrahydrofolate (mTHF) as the methyl donor and reductant in the reaction, yielding dihydrofolate (DHF) as a by-product. This enzymatic reaction provides an intracellular de novo source of dTMP, an essential precursor for DNA biosynthesis. This Ligilactobacillus salivarius (strain UCC118) (Lactobacillus salivarius) protein is Thymidylate synthase.